An 803-amino-acid chain; its full sequence is Palmitoyl thioesterase CPT1C (803 aa).

Residues 1 to 52 (MAEAHQAVGFRPSLTSDGAEVELSAPVLQEIYLSGLRSWKRHLSRFWNDFLT) are Cytoplasmic-facing. A helical membrane pass occupies residues 53 to 75 (GVFPASPLSWLFLFSAIQLAWFL). Over 76–103 (QLDPSLGLMEKIKELLPDWGGQHHGLRG) the chain is Lumenal. A helical membrane pass occupies residues 104-126 (VLAAALFASCLWGALIFTLHVAL). Residues 127-803 (RLLLSYHGWL…SKASMTSTDF (677 aa)) lie on the Cytoplasmic side of the membrane. The active-site Proton acceptor is the His470. CoA is bound at residue 552 to 564 (GKSFIRRCHLSSD). (R)-carnitine is bound by residues Tyr586, Ser588, and Thr599. Residues 761 to 803 (LFQAGQHFKRRFRGSGKENSRHRCGFLSRQTGASKASMTSTDF) form a required for interaction with GRIA1 region. A disordered region spans residues 772–803 (FRGSGKENSRHRCGFLSRQTGASKASMTSTDF). Residues 788–803 (SRQTGASKASMTSTDF) show a composition bias toward polar residues.

This sequence belongs to the carnitine/choline acetyltransferase family. In terms of assembly, peripherally associated with AMPAR complex. AMPAR complex consists of an inner core made of 4 pore-forming GluA/GRIA proteins (GRIA1, GRIA2, GRIA3 and GRIA4) and 4 major auxiliary subunits arranged in a twofold symmetry. One of the two pairs of distinct binding sites is occupied either by CNIH2, CNIH3 or CACNG2, CACNG3. The other harbors CACNG2, CACNG3, CACNG4, CACNG8 or GSG1L. This inner core of AMPAR complex is complemented by outer core constituents binding directly to the GluA/GRIA proteins at sites distinct from the interaction sites of the inner core constituents. Outer core constituents include at least PRRT1, PRRT2, CKAMP44/SHISA9, FRRS1L and NRN1. The proteins of the inner and outer core serve as a platform for other, more peripherally associated AMPAR constituents, including CPT1C. Alone or in combination, these auxiliary subunits control the gating and pharmacology of the AMPAR complex and profoundly impact their biogenesis and protein processing. Interacts with SACM1L; the interaction regulates SACM1L phosphatidylinositol-3-phosphatase activity and translocation to endoplasmic reticulum/trans Golgi network in a malonyl-CoA dependent manner. Interacts with ATL1. In terms of tissue distribution, expressed predominantly in brain and testis. Expressed in motor neurons.

The protein resides in the cell projection. It is found in the dendrite. It localises to the axon. Its subcellular location is the endoplasmic reticulum membrane. It carries out the reaction S-hexadecanoyl-L-cysteinyl-[protein] + H2O = L-cysteinyl-[protein] + hexadecanoate + H(+). Palmitoyl thioesterase specifically expressed in the endoplasmic reticulum of neurons. Modulates the trafficking of the glutamate receptor, AMPAR, to plasma membrane through depalmitoylation of GRIA1. Also regulates AMPR trafficking through the regulation of SACM1L phosphatidylinositol-3-phosphatase activity by interaction in a malonyl-CoA dependent manner. Binds malonyl-CoA and couples malonyl-CoA to ceramide levels, necessary for proper spine maturation and contributing to systemic energy homeostasis and appetite control. Binds to palmitoyl-CoA, but does not have carnitine palmitoyltransferase 1 catalytic activity or at very low levels. The protein is Palmitoyl thioesterase CPT1C of Homo sapiens (Human).